The following is a 221-amino-acid chain: MCKEIEGQKLFGSAIILAGGRSSRMGFDKQFIEINEKRLIEITAGRLAQIFDEIIIVTNRPEMHSCCQYKLTSDIIKGKGPLGGIHAGLLAAESEFVFAIACDMPYINLDYIEHMKCVVESSIKAGEDIDACITLKGEWIEPFNAFYRKSLVKSIEEHLESDKRAVYSLLKQLNTTYISEFEARRFSPDWSMFFNMNTMEELRQYSQVTQEEKPNGKVEIL.

GTP is bound by residues 17–19 (LAG), Lys29, Asp74, and Asp103. Asp103 contributes to the Mg(2+) binding site.

The protein belongs to the MobA family. Mg(2+) serves as cofactor.

Its subcellular location is the cytoplasm. The enzyme catalyses Mo-molybdopterin + GTP + H(+) = Mo-molybdopterin guanine dinucleotide + diphosphate. Functionally, transfers a GMP moiety from GTP to Mo-molybdopterin (Mo-MPT) cofactor (Moco or molybdenum cofactor) to form Mo-molybdopterin guanine dinucleotide (Mo-MGD) cofactor. In Peptoclostridium acidaminophilum (Eubacterium acidaminophilum), this protein is Probable molybdenum cofactor guanylyltransferase.